The chain runs to 482 residues: Glycogen synthase (482 aa).

Lys15 contributes to the ADP-alpha-D-glucose binding site.

Belongs to the glycosyltransferase 1 family. Bacterial/plant glycogen synthase subfamily.

The catalysed reaction is [(1-&gt;4)-alpha-D-glucosyl](n) + ADP-alpha-D-glucose = [(1-&gt;4)-alpha-D-glucosyl](n+1) + ADP + H(+). The protein operates within glycan biosynthesis; glycogen biosynthesis. Functionally, synthesizes alpha-1,4-glucan chains using ADP-glucose. The protein is Glycogen synthase of Hydrogenobaculum sp. (strain Y04AAS1).